The sequence spans 830 residues: Adhesion G protein-coupled receptor E2 (830 aa).

The N-terminal stretch at 1 to 22 is a signal peptide; the sequence is MRHGHPRLLPGLLMLLLLPLGA. Topologically, residues 23 to 540 are extracellular; that stretch reads AAQKTSGCAR…MAHYDVQEED (518 aa). The region spanning 26-68 is the EGF-like 1 domain; it reads KTSGCARWCPPKSTCVNATTCRCSPGFSSLSGEIFSSPLESCD. Cystine bridges form between Cys30–Cys40, Cys34–Cys46, Cys48–Cys67, Cys73–Cys87, and Cys81–Cys96. N-linked (GlcNAc...) asparagine glycosylation occurs at Asn42. Residues 69 to 108 enclose the EGF-like 1; calcium-binding domain; it reads DIDECGPPPLVSCGRLADCQNTEGSYHCMCSPGYALASGA. The N-linked (GlcNAc...) asparagine glycan is linked to Asn113. Residues 121 to 159 form the EGF-like 2; calcium-binding domain; it reads DVDECQLKPRVCKSRGICTNTKGSYTCKCPPGFELNLGD. 6 cysteine pairs are disulfide-bonded: Cys125/Cys138, Cys132/Cys147, Cys169/Cys182, Cys176/Cys191, Cys218/Cys231, and Cys225/Cys240. In terms of domain architecture, EGF-like 3; calcium-binding spans 165-203; sequence DVNECTSGQNPCHNSTHCLNNIGGYECRCRPGWKPVPGS. Residue Asn178 is glycosylated (N-linked (GlcNAc...) asparagine). Positions 214–253 constitute an EGF-like 4; calcium-binding domain; sequence DVDECSSGKHTCHYSTVCINTVGSYKCRCRRGWKPKPRFQ. N-linked (GlcNAc...) asparagine glycosylation is found at Asn258, Asn348, Asn361, and Asn379. A GAIN-B domain is found at 358 to 537; it reads WTFNASAGTD…AVLMAHYDVQ (180 aa). 2 disulfides stabilise this stretch: Cys489–Cys519 and Cys507–Cys521. The segment at 489-537 is GPS; the sequence is CVFWEHSQDECGHWSTRGCTVVDSGDTSTTCQCTHLSSFAVLMAHYDVQ. A helical transmembrane segment spans residues 541 to 561; sequence LVLPVITYVGLGLSLLCLLLA. The Cytoplasmic segment spans residues 562–576; that stretch reads ALTFLLCKAIQNTST. A helical membrane pass occupies residues 577–597; that stretch reads SLHLQLLICLFLAHLLFLMAI. Residues 598-603 are Extracellular-facing; sequence DRTEIK. A helical transmembrane segment spans residues 604–624; sequence VLCSIIAGALHYLYLASFTWM. The Cytoplasmic portion of the chain corresponds to 625-651; it reads LLEGLHLFLTARNLMVVNYSSVSMLMK. Residues 652–672 traverse the membrane as a helical segment; it reads KLMYPVGYGVPTLIVAISAAS. Residues 673–690 lie on the Extracellular side of the membrane; the sequence is RSHLYGTRTRCWLNPEER. A helical membrane pass occupies residues 691–711; it reads FIWSFLGPVCTIFSVNLGFFL. The Cytoplasmic portion of the chain corresponds to 712–744; it reads MTLWILKSKLSSLNSDVSTLQNTRMLTFKAIAQ. Residues 745–765 form a helical membrane-spanning segment; the sequence is LFILGCTWCLGILQVGPAAHV. Topologically, residues 766–767 are extracellular; that stretch reads MA. A helical membrane pass occupies residues 768–788; the sequence is YLFTIINSLQGVFIFLVYCLL. Topologically, residues 789–830 are cytoplasmic; the sequence is SQQVREEYGKWFKGIRKTRAESEKYTLSSRAMSDVNKPMMVN.

The protein belongs to the G-protein coupled receptor 2 family. Adhesion G-protein coupled receptor (ADGR) subfamily. In terms of assembly, forms a heterodimer, consisting of a large extracellular region non-covalently linked to a seven-transmembrane moiety. Interacts with chondroitin sulfate; the interaction with chondroitin sulfate is calcium-dependent. Interacts with CD55. Autoproteolytically cleaved into 2 subunits, an extracellular alpha subunit and a seven-transmembrane beta subunit.

It localises to the cell membrane. The protein localises to the cell projection. It is found in the ruffle membrane. Functionally, cell surface receptor that binds to the chondroitin sulfate moiety of glycosaminoglycan chains and promotes cell attachment. Promotes granulocyte chemotaxis, degranulation and adhesion. In macrophages, promotes the release of inflammatory cytokines, including IL8 and TNF. Signals probably through G-proteins. This is Adhesion G protein-coupled receptor E2 (ADGRE2) from Canis lupus familiaris (Dog).